The following is a 90-amino-acid chain: MSITSQKKKSLISTYAIKEDDTGSSFVQCAILTERISNLTEHFKAHKHDHNSKRGLLILIGRRRKHLNYIKRKFGNEAYQELIEKLGIRK.

This sequence belongs to the universal ribosomal protein uS15 family. As to quaternary structure, part of the 30S ribosomal subunit. Forms a bridge to the 50S subunit in the 70S ribosome, contacting the 23S rRNA.

Functionally, one of the primary rRNA binding proteins, it binds directly to 16S rRNA where it helps nucleate assembly of the platform of the 30S subunit by binding and bridging several RNA helices of the 16S rRNA. Forms an intersubunit bridge (bridge B4) with the 23S rRNA of the 50S subunit in the ribosome. The chain is Small ribosomal subunit protein uS15 from Wolbachia pipientis subsp. Culex pipiens (strain wPip).